The primary structure comprises 581 residues: Amino-acid acetyltransferase, mitochondrial (581 aa).

The N-acetyltransferase domain maps to 401–558; that stretch reads FTLHNLIEDE…RIVGSEAVNI (158 aa).

This sequence belongs to the acetyltransferase family.

The protein localises to the mitochondrion. It catalyses the reaction L-glutamate + acetyl-CoA = N-acetyl-L-glutamate + CoA + H(+). The protein operates within amino-acid biosynthesis; L-arginine biosynthesis; N(2)-acetyl-L-ornithine from L-glutamate: step 1/4. Its function is as follows. N-acetylglutamate synthase involved in arginine biosynthesis. The sequence is that of Amino-acid acetyltransferase, mitochondrial (ARG2) from Scheffersomyces stipitis (strain ATCC 58785 / CBS 6054 / NBRC 10063 / NRRL Y-11545) (Yeast).